We begin with the raw amino-acid sequence, 243 residues long: Pyridoxine 5'-phosphate synthase (243 aa).

Asparagine 6 contacts 3-amino-2-oxopropyl phosphate. 8-9 (DH) contributes to the 1-deoxy-D-xylulose 5-phosphate binding site. Residue arginine 17 coordinates 3-amino-2-oxopropyl phosphate. Histidine 42 serves as the catalytic Proton acceptor. Residues arginine 44 and histidine 49 each coordinate 1-deoxy-D-xylulose 5-phosphate. Glutamate 72 serves as the catalytic Proton acceptor. Position 102 (threonine 102) interacts with 1-deoxy-D-xylulose 5-phosphate. Catalysis depends on histidine 192, which acts as the Proton donor. 3-amino-2-oxopropyl phosphate contacts are provided by residues glycine 193 and 214–215 (GH).

It belongs to the PNP synthase family. Homooctamer; tetramer of dimers.

The protein resides in the cytoplasm. It carries out the reaction 3-amino-2-oxopropyl phosphate + 1-deoxy-D-xylulose 5-phosphate = pyridoxine 5'-phosphate + phosphate + 2 H2O + H(+). Its pathway is cofactor biosynthesis; pyridoxine 5'-phosphate biosynthesis; pyridoxine 5'-phosphate from D-erythrose 4-phosphate: step 5/5. In terms of biological role, catalyzes the complicated ring closure reaction between the two acyclic compounds 1-deoxy-D-xylulose-5-phosphate (DXP) and 3-amino-2-oxopropyl phosphate (1-amino-acetone-3-phosphate or AAP) to form pyridoxine 5'-phosphate (PNP) and inorganic phosphate. The protein is Pyridoxine 5'-phosphate synthase of Sulfurihydrogenibium sp. (strain YO3AOP1).